We begin with the raw amino-acid sequence, 346 residues long: Phosphoribosylformylglycinamidine cyclo-ligase (346 aa).

This sequence belongs to the AIR synthase family.

The protein resides in the cytoplasm. It carries out the reaction 2-formamido-N(1)-(5-O-phospho-beta-D-ribosyl)acetamidine + ATP = 5-amino-1-(5-phospho-beta-D-ribosyl)imidazole + ADP + phosphate + H(+). It participates in purine metabolism; IMP biosynthesis via de novo pathway; 5-amino-1-(5-phospho-D-ribosyl)imidazole from N(2)-formyl-N(1)-(5-phospho-D-ribosyl)glycinamide: step 2/2. In Bacillus cereus (strain AH187), this protein is Phosphoribosylformylglycinamidine cyclo-ligase.